The primary structure comprises 124 residues: Fluoride-specific ion channel FluC 2 (124 aa).

Helical transmembrane passes span Leu-8–Val-28, Asn-34–Phe-54, Leu-60–Cys-80, and Leu-93–Ile-113. Residues Gly-68 and Thr-71 each coordinate Na(+).

Belongs to the fluoride channel Fluc/FEX (TC 1.A.43) family.

Its subcellular location is the cell inner membrane. The enzyme catalyses fluoride(in) = fluoride(out). Its activity is regulated as follows. Na(+) is not transported, but it plays an essential structural role and its presence is essential for fluoride channel function. In terms of biological role, fluoride-specific ion channel. Important for reducing fluoride concentration in the cell, thus reducing its toxicity. This chain is Fluoride-specific ion channel FluC 2, found in Prochlorococcus marinus (strain MIT 9313).